The primary structure comprises 372 residues: NAD(P)H-quinone oxidoreductase subunit 1 (372 aa).

The next 8 helical transmembrane spans lie at 27–47, 97–117, 128–148, 166–186, 204–224, 266–286, 308–328, and 347–367; these read LIWL…GVLV, LLFT…WLIV, VGIG…GLLM, AAQS…VVMM, LLSW…ICAL, VLSS…PIPV, SVGI…AILL, and FLLP…LAFP.

It belongs to the complex I subunit 1 family. NDH-1 is composed of at least 11 different subunits.

It localises to the cellular thylakoid membrane. It catalyses the reaction a plastoquinone + NADH + (n+1) H(+)(in) = a plastoquinol + NAD(+) + n H(+)(out). The catalysed reaction is a plastoquinone + NADPH + (n+1) H(+)(in) = a plastoquinol + NADP(+) + n H(+)(out). Its function is as follows. NDH-1 shuttles electrons from an unknown electron donor, via FMN and iron-sulfur (Fe-S) centers, to quinones in the respiratory and/or the photosynthetic chain. The immediate electron acceptor for the enzyme in this species is believed to be plastoquinone. Couples the redox reaction to proton translocation, and thus conserves the redox energy in a proton gradient. In Prochlorococcus marinus (strain MIT 9313), this protein is NAD(P)H-quinone oxidoreductase subunit 1.